Consider the following 511-residue polypeptide: 2,3-bisphosphoglycerate-independent phosphoglycerate mutase (511 aa).

Mn(2+) contacts are provided by Asp-14 and Ser-64. The Phosphoserine intermediate role is filled by Ser-64. Substrate contacts are provided by residues His-125, 155–156, Arg-187, Arg-193, 259–262, and Lys-333; these read RD and RADR. Mn(2+) contacts are provided by Asp-400, His-404, Asp-441, His-442, and His-460.

The protein belongs to the BPG-independent phosphoglycerate mutase family. In terms of assembly, monomer. Requires Mn(2+) as cofactor.

The catalysed reaction is (2R)-2-phosphoglycerate = (2R)-3-phosphoglycerate. Its pathway is carbohydrate degradation; glycolysis; pyruvate from D-glyceraldehyde 3-phosphate: step 3/5. Functionally, catalyzes the interconversion of 2-phosphoglycerate and 3-phosphoglycerate. This Pseudomonas entomophila (strain L48) protein is 2,3-bisphosphoglycerate-independent phosphoglycerate mutase.